The primary structure comprises 81 residues: Acyl carrier protein (81 aa).

The region spanning Ser-4 to Val-79 is the Carrier domain. Ser-39 is modified (O-(pantetheine 4'-phosphoryl)serine).

It belongs to the acyl carrier protein (ACP) family. Post-translationally, 4'-phosphopantetheine is transferred from CoA to a specific serine of apo-ACP by AcpS. This modification is essential for activity because fatty acids are bound in thioester linkage to the sulfhydryl of the prosthetic group.

It localises to the cytoplasm. It participates in lipid metabolism; fatty acid biosynthesis. Functionally, carrier of the growing fatty acid chain in fatty acid biosynthesis. The polypeptide is Acyl carrier protein (Acaryochloris marina (strain MBIC 11017)).